Here is a 203-residue protein sequence, read N- to C-terminus: Small ribosomal subunit protein uS4c (203 aa).

Positions 15 to 43 are disordered; sequence LGSLPGLTSKRPRSGSDLRNQSRSGKRSQ. The region spanning 89–169 is the S4 RNA-binding domain; the sequence is MRLDNILFRL…LPKHLTLHSL (81 aa).

The protein belongs to the universal ribosomal protein uS4 family. Part of the 30S ribosomal subunit. Contacts protein S5. The interaction surface between S4 and S5 is involved in control of translational fidelity.

Its subcellular location is the plastid. It is found in the chloroplast. One of the primary rRNA binding proteins, it binds directly to 16S rRNA where it nucleates assembly of the body of the 30S subunit. Functionally, with S5 and S12 plays an important role in translational accuracy. The protein is Small ribosomal subunit protein uS4c (rps4) of Illicium oligandrum (Star anise).